A 447-amino-acid chain; its full sequence is MTTILKHLPVGQRIGIAFSGGLDTSAALLWMRQKGAVPYAYTANLGQPDEEDYDAIPRRAMEYGAENARLIDCRKQLVAEGIAAIQCGAFHNTTGGLTYFNTTPLGRAVTGTMLVAAMKEDGVNIWGDGSTYKGNDIERFYRYGLLTNAELQIYKPWLDTDFIDELGGRHEMSEFMIACGFDYKMSVEKAYSTDSNMLGATHEAKDLEYLNSSVKIVNPIMGVKFWDESVKIPAEEVTVRFEQGHPVALNGKTFSDDVEMMLEANRIGGRHGLGMSDQIENRIIEAKSRGIYEAPGMALLHIAYERLLTGIHNEDTIEQYHAHGRQLGRLLYQGRWFDSQALMLRDSLQRWVASQITGEVTLELRRGNDYSILNTVSENLTYKPERLTMEKGDSVFSPDDRIGQLTMRNLDITDTREKLFGYAKTGLLSSSATSGLPQVENMENKGQ.

Residues 17 to 25 (AFSGGLDTS) and alanine 43 each bind ATP. Position 99 (tyrosine 99) interacts with L-citrulline. ATP-binding residues include glycine 129 and threonine 131. Residues threonine 131, asparagine 135, and aspartate 136 each coordinate L-aspartate. Asparagine 135 provides a ligand contact to L-citrulline. Residue aspartate 136 participates in ATP binding. Arginine 139 and serine 192 together coordinate L-citrulline. Aspartate 194 provides a ligand contact to ATP. The L-citrulline site is built by threonine 201, glutamate 203, and glutamate 280.

It belongs to the argininosuccinate synthase family. Type 2 subfamily. As to quaternary structure, homotetramer.

The protein resides in the cytoplasm. The enzyme catalyses L-citrulline + L-aspartate + ATP = 2-(N(omega)-L-arginino)succinate + AMP + diphosphate + H(+). It functions in the pathway amino-acid biosynthesis; L-arginine biosynthesis; L-arginine from L-ornithine and carbamoyl phosphate: step 2/3. This Shigella flexneri serotype 5b (strain 8401) protein is Argininosuccinate synthase.